The following is a 468-amino-acid chain: MVVGDFPIETDTIVIGAGPGGYVAAIRAAQLGQKVTIVEKGNLGGVCLNVGCIPSKALLHASHRFVEAQHSENLGVIAESVSLNFQKVQEFKSSVVNKLTGGVEGLLKGNKVNIVKGEAYFVDNNSLRVMDEKSAQTYNFKNAIIATGSRPIEIPNFKFGKRVIDSTGALNLQEVPGKLVVVGGGYIGSELGTAFANFGSEVTILEGAKDILGGFEKQMTQPVKKGMKEKGVEIVTEAMAKSAEETDNGVKVTYEAKGEEKTIEADYVLVTVGRRPNTDELGLEELGVKFADRGLLEVDKQSRTSISNIYAIGDIVPGLPLAHKASYEAKVAAEAIDGQAAEVDYIGMPAVCFTEPELATVGYSEAQAKEEGLAIKASKFPYAANGRALSLDDTNGFVKLITLKEDDTLIGAQVVGTGASDIISELGLAIEAGMNAEDIALTIHAHPTLGEMTMEAAEKAIGYPIHTM.

FAD contacts are provided by residues 39–47, K56, and A119; that span reads EKGNLGGVC. C47 and C52 are oxidised to a cystine. Residues 183–187, E206, and 271–274 contribute to the NAD(+) site; these read GGGYI and TVGR. Positions 314 and 322 each coordinate FAD. Residue H446 is the Proton acceptor of the active site.

Belongs to the class-I pyridine nucleotide-disulfide oxidoreductase family. As to quaternary structure, homodimer. FAD serves as cofactor.

It is found in the cytoplasm. The protein resides in the membrane. It carries out the reaction N(6)-[(R)-dihydrolipoyl]-L-lysyl-[protein] + NAD(+) = N(6)-[(R)-lipoyl]-L-lysyl-[protein] + NADH + H(+). Its function is as follows. Lipoamide dehydrogenase is a component of the alpha-ketoacid dehydrogenase complexes. This chain is Dihydrolipoyl dehydrogenase (pdhD), found in Staphylococcus aureus (strain COL).